The chain runs to 334 residues: Eukaryotic translation initiation factor 3 subunit H (334 aa).

Positions 20–152 (VQCDGLAAMK…LKAYRLTPQA (133 aa)) constitute an MPN domain.

Belongs to the eIF-3 subunit H family. In terms of assembly, component of the eukaryotic translation initiation factor 3 (eIF-3) complex.

The protein resides in the cytoplasm. Component of the eukaryotic translation initiation factor 3 (eIF-3) complex, which is involved in protein synthesis of a specialized repertoire of mRNAs and, together with other initiation factors, stimulates binding of mRNA and methionyl-tRNAi to the 40S ribosome. The eIF-3 complex specifically targets and initiates translation of a subset of mRNAs involved in cell proliferation. The protein is Eukaryotic translation initiation factor 3 subunit H of Anopheles gambiae (African malaria mosquito).